The following is a 272-amino-acid chain: Phosphonates import ATP-binding protein PhnC (272 aa).

Residues 2-244 form the ABC transporter domain; it reads LVFDKVNRVY…IQKRLYEIEH (243 aa). An ATP-binding site is contributed by 35 to 42; that stretch reads GPSGAGKS.

Belongs to the ABC transporter superfamily. Phosphonates importer (TC 3.A.1.9.1) family. In terms of assembly, the complex is composed of two ATP-binding proteins (PhnC), two transmembrane proteins (PhnE) and a solute-binding protein (PhnD).

Its subcellular location is the cell inner membrane. It catalyses the reaction phosphonate(out) + ATP + H2O = phosphonate(in) + ADP + phosphate + H(+). Its function is as follows. Part of the ABC transporter complex PhnCDE involved in phosphonates import. Responsible for energy coupling to the transport system. The protein is Phosphonates import ATP-binding protein PhnC of Hydrogenovibrio crunogenus (strain DSM 25203 / XCL-2) (Thiomicrospira crunogena).